A 129-amino-acid polypeptide reads, in one-letter code: MATTYATGKRKTAIAKVWVKPGSGKISVNGVDLNTWLGGHEAIKLKVVQPLLVTKQETSMDIKATTLGGGYSAQAEALRHGISRALAAMDADFRALLKPKGLLTRDSRTVERKKYGRRKARRSPQFSKR.

The segment at 107–129 is disordered; sequence SRTVERKKYGRRKARRSPQFSKR. Residues 114 to 129 show a composition bias toward basic residues; that stretch reads KYGRRKARRSPQFSKR.

This sequence belongs to the universal ribosomal protein uS9 family.

In Campylobacter jejuni subsp. jejuni serotype O:23/36 (strain 81-176), this protein is Small ribosomal subunit protein uS9.